Consider the following 85-residue polypeptide: Neurotoxin beta-KTx 17 (85 aa).

Residues 1–20 (MKQYIFFLALIVLVSTFAEA) form the signal peptide. A propeptide spanning residues 21 to 37 (GKKTEILDKVKKVFSKG) is cleaved from the precursor. The BetaSPN-type CS-alpha/beta domain maps to 49–85 (ELGCPFIEKWCEDHCESKKQVGKCENFDCSCVKLGGK). 3 disulfides stabilise this stretch: Cys-52–Cys-72, Cys-59–Cys-77, and Cys-63–Cys-79.

The protein belongs to the long chain scorpion toxin family. Class 2 subfamily. Expressed by the venom gland.

Its subcellular location is the secreted. Has a very weak effect to block voltage-gated potassium channel Kv1.1/KCNA1. The protein is Neurotoxin beta-KTx 17 of Lychas mucronatus (Chinese swimming scorpion).